We begin with the raw amino-acid sequence, 171 residues long: MTAILITGYRSFEIGIFDHKDPRVSIIKQAIRKDLIGYLENGVDWFIFTGNLGFEQWALEVANELKEEYPLQIATIFLFETHGDRWNEKNKEVLSQFRAVDFVKYYFPNYEQPTQFSQYYQFLLEKTEGAYVFYDTENETNLKYFLKKAKDMPHYQLLLLTFDRLNDMSQS.

This sequence belongs to the UPF0398 family.

This Streptococcus pyogenes serotype M1 protein is UPF0398 protein SPy_1647/M5005_Spy1353.